The following is a 262-amino-acid chain: Methylthioribulose-1-phosphate dehydratase (262 aa).

Cys-115 lines the substrate pocket. 2 residues coordinate Zn(2+): His-133 and His-135. Glu-158 (proton donor/acceptor) is an active-site residue. A Zn(2+)-binding site is contributed by His-223.

The protein belongs to the aldolase class II family. MtnB subfamily. The cofactor is Zn(2+).

It is found in the cytoplasm. The catalysed reaction is 5-(methylsulfanyl)-D-ribulose 1-phosphate = 5-methylsulfanyl-2,3-dioxopentyl phosphate + H2O. It participates in amino-acid biosynthesis; L-methionine biosynthesis via salvage pathway; L-methionine from S-methyl-5-thio-alpha-D-ribose 1-phosphate: step 2/6. Its function is as follows. Catalyzes the dehydration of methylthioribulose-1-phosphate (MTRu-1-P) into 2,3-diketo-5-methylthiopentyl-1-phosphate (DK-MTP-1-P). The sequence is that of Methylthioribulose-1-phosphate dehydratase from Meyerozyma guilliermondii (strain ATCC 6260 / CBS 566 / DSM 6381 / JCM 1539 / NBRC 10279 / NRRL Y-324) (Yeast).